We begin with the raw amino-acid sequence, 329 residues long: Tryptophan--tRNA ligase (329 aa).

Residues 9-11 and 17-18 each bind ATP; these read QPS and GN. The 'HIGH' region motif lies at 10 to 18; sequence PSGIPTIGN. L-tryptophan is bound at residue aspartate 133. ATP is bound by residues 145-147, valine 184, and 193-197; these read GDD and KMSKS. The 'KMSKS' region motif lies at 193–197; it reads KMSKS.

It belongs to the class-I aminoacyl-tRNA synthetase family. As to quaternary structure, homodimer.

It localises to the cytoplasm. The enzyme catalyses tRNA(Trp) + L-tryptophan + ATP = L-tryptophyl-tRNA(Trp) + AMP + diphosphate + H(+). Catalyzes the attachment of tryptophan to tRNA(Trp). In Staphylococcus epidermidis (strain ATCC 35984 / DSM 28319 / BCRC 17069 / CCUG 31568 / BM 3577 / RP62A), this protein is Tryptophan--tRNA ligase.